The primary structure comprises 224 residues: Metalloproteinase inhibitor 4 (224 aa).

The signal sequence occupies residues M1–A29. C30 is a Zn(2+) binding site. Involved in metalloproteinase-binding regions lie at residues C30–A33 and S99–S100. Cystine bridges form between C30-C102, C32-C131, C42-C156, C158-C205, C163-C168, and C176-C197. Positions C30 to C156 constitute an NTR domain.

The protein belongs to the protease inhibitor I35 (TIMP) family.

It is found in the secreted. Functionally, complexes with metalloproteinases (such as collagenases) and irreversibly inactivates them by binding to their catalytic zinc cofactor. This Bos taurus (Bovine) protein is Metalloproteinase inhibitor 4 (TIMP4).